Reading from the N-terminus, the 274-residue chain is Mitochondrial outer membrane protein porin 4 (274 aa).

An N-acetylglycine modification is found at Gly2. Ser76 carries the phosphoserine modification.

Belongs to the eukaryotic mitochondrial porin (TC 1.B.8.1) family. In terms of tissue distribution, widely expressed.

It is found in the cell membrane. The protein resides in the mitochondrion outer membrane. Forms a channel through the mitochondrial outer membrane that allows diffusion of small hydrophilic molecules. The channel adopts an open conformation at low or zero membrane potential and a closed conformation at potentials above 30-40 mV. The open state has a weak anion selectivity whereas the closed state is cation-selective. Involved in plant growth and development at the vegetative and reproductive stages. Is important for leaf and pollen development and mitochondrial membrane potential steady state. May be involved in disease resistance. The sequence is that of Mitochondrial outer membrane protein porin 4 (VDAC4) from Arabidopsis thaliana (Mouse-ear cress).